Reading from the N-terminus, the 53-residue chain is Small, acid-soluble spore protein O (53 aa).

The interval 1–53 (MVRKKANHSRPGMNAAKAQGKDAGLTSQFHAEIGQEPLNQAQRQNNKKRKKNQ) is disordered.

This sequence belongs to the SspO family.

The protein localises to the spore core. The chain is Small, acid-soluble spore protein O from Halalkalibacterium halodurans (strain ATCC BAA-125 / DSM 18197 / FERM 7344 / JCM 9153 / C-125) (Bacillus halodurans).